The following is a 206-amino-acid chain: Small ribosomal subunit protein uS4 (206 aa).

The S4 RNA-binding domain occupies 96 to 157 (RRLDNVVYRM…KAKKQVRIQD (62 aa)).

This sequence belongs to the universal ribosomal protein uS4 family. Part of the 30S ribosomal subunit. Contacts protein S5. The interaction surface between S4 and S5 is involved in control of translational fidelity.

Functionally, one of the primary rRNA binding proteins, it binds directly to 16S rRNA where it nucleates assembly of the body of the 30S subunit. In terms of biological role, with S5 and S12 plays an important role in translational accuracy. This Thioalkalivibrio sulfidiphilus (strain HL-EbGR7) protein is Small ribosomal subunit protein uS4.